Consider the following 109-residue polypeptide: Period circadian protein (109 aa).

The segment at 59–109 (CFEGSGGSGSSGNFTSGSNLNMRSVTNTSNTGTGTSSESVPLVTLTEALIS) is disordered. Over residues 69-98 (SGNFTSGSNLNMRSVTNTSNTGTGTSSESV) the composition is skewed to low complexity.

Forms a heterodimer with timeless (TIM); the complex then translocates into the nucleus. Phosphorylated with a circadian rhythmicity, probably by the double-time protein (dbt). Phosphorylation could be implicated in the stability of per monomer and in the formation of heterodimer per-tim.

It is found in the nucleus. Its subcellular location is the cytoplasm. The protein resides in the perinuclear region. Essential for biological clock functions. Determines the period length of circadian and ultradian rhythms; an increase in PER dosage leads to shortened circadian rhythms and a decrease leads to lengthened circadian rhythms. Essential for the circadian rhythmicity of locomotor activity, eclosion behavior, and for the rhythmic component of the male courtship song that originates in the thoracic nervous system. The biological cycle depends on the rhythmic formation and nuclear localization of the TIM-PER complex. Light induces the degradation of TIM, which promotes elimination of PER. Nuclear activity of the heterodimer coordinatively regulates PER and TIM transcription through a negative feedback loop. Behaves as a negative element in circadian transcriptional loop. Does not appear to bind DNA, suggesting indirect transcriptional inhibition. The sequence is that of Period circadian protein (per) from Syritta pipiens (Hoverfly).